The chain runs to 133 residues: Classical arabinogalactan protein 5 (133 aa).

An N-terminal signal peptide occupies residues 1 to 21 (MASKSVVVFLFLALVASSVVA). Position 22 is a pyrrolidone carboxylic acid (Q22). A disordered region spans residues 23–110 (APGPAPTISP…QSPLSGSPNA (88 aa)). Residues 25 to 37 (GPAPTISPLPATP) are compositionally biased toward pro residues. Positions 38–48 (TPSQSPRATAP) are enriched in low complexity. Pro residues predominate over residues 49–81 (APSPSANPPPSAPTTAPPVSQPPTESPPAPPTS). N109 is lipidated: GPI-anchor amidated asparagine. Positions 110–133 (AAAVSRVSLVGTFAGVAVIAALLL) are cleaved as a propeptide — removed in mature form.

The protein belongs to the classical AGP family. O-glycosylated on the hydroxyproline residues. Expressed at a low level in flowers and siliques.

Its subcellular location is the cell membrane. Functionally, proteoglycan that seems to be implicated in diverse developmental roles such as differentiation, cell-cell recognition, embryogenesis and programmed cell death. This chain is Classical arabinogalactan protein 5 (AGP5), found in Arabidopsis thaliana (Mouse-ear cress).